Here is a 307-residue protein sequence, read N- to C-terminus: Transcription factor bHLH127 (307 aa).

Disordered stretches follow at residues 41–68 and 101–155; these read SDPL…LPHQ and PHPQ…AEMH. Pro residues predominate over residues 110 to 119; sequence APPPPKPPSS. The region spanning 150–199 is the bHLH domain; that stretch reads RAAEMHNLAERRRREKINERMKTLQQLIPRCNKSTKVSMLEDVIEYVKSL.

This sequence belongs to the bHLH protein family. Homodimer.

The protein localises to the nucleus. The sequence is that of Transcription factor bHLH127 (BHLH127) from Arabidopsis thaliana (Mouse-ear cress).